The sequence spans 928 residues: G-protein coupled receptor family C group 6 member A (928 aa).

A signal peptide spans 1 to 20 (MALLITVVTCFMIILDTSQS). Over 21 to 594 (CHTPDDFVAI…EYLDWDDSLA (574 aa)) the chain is Extracellular. Residues asparagine 332, asparagine 555, and asparagine 567 are each glycosylated (N-linked (GlcNAc...) asparagine). Residues 595 to 615 (LLLIALSLLGIAFVLAIGIIF) traverse the membrane as a helical segment. The Cytoplasmic portion of the chain corresponds to 616 to 630 (TRNLKTPVVKSSGGL). A helical membrane pass occupies residues 631–651 (VVCYVMLICHALNFASTGFFI). Topologically, residues 652-669 (GEPQDFACKTRQTLFGVS) are extracellular. A helical transmembrane segment spans residues 670–690 (FTLCVSCILTKSLKILLAFSF). Residues 691-706 (DPKLTMFLKCLYRPVP) are Cytoplasmic-facing. The chain crosses the membrane as a helical span at residues 707 to 727 (IVLTCTGIQVVICTLWLVLAA). The Extracellular segment spans residues 728-750 (PSVEENISLPRVIILECEEGSAL). Residues 751–771 (AFGTMLGYITVLAFICFVFAF) traverse the membrane as a helical segment. Over 772–784 (KGRKLPENYNEAK) the chain is Cytoplasmic. Residues 785–805 (FLTFGMLIYFIAWITFIPVYT) traverse the membrane as a helical segment. Residues 806–812 (TTFGKYL) are Extracellular-facing. The helical transmembrane segment at 813-833 (PAVEIIVILISNYGILCCIFF) threads the bilayer. Topologically, residues 834–928 (PKCYIILCKQ…TLRQKRSSSI (95 aa)) are cytoplasmic.

It belongs to the G-protein coupled receptor 3 family. In terms of assembly, homodimer; disulfide-linked. N-glycosylated. As to expression, expressed at high level in liver, lung, spleen and heart. Expressed at lower level in kidney, skeletal muscle and brain. Expressed in 7 dpc, 11 dpc, 15 dpc and 17 dpc embryos.

It localises to the cell membrane. Receptor activated by multiple ligands, including osteocalcin (BGLAP), basic amino acids, and various cations. Activated by amino acids with a preference for basic amino acids such as L-Lys, L-Arg and L-ornithine but also by small and polar amino acids. The L-alpha amino acids respond is augmented by divalent cations Ca(2+) and Mg(2+). Seems to act through a G(q)/G(11) and G(i)-coupled pathway. Regulates testosterone production by acting as a ligand for uncarboxylated osteocalcin hormone: osteocalcin-binding at the surface of Leydig cells initiates a signaling response that promotes the expression of enzymes required for testosterone synthesis in a CREB-dependent manner. Mediates the non-genomic effects of androgens in multiple tissue. May coordinate nutritional and hormonal anabolic signals through the sensing of extracellular amino acids, osteocalcin, divalent ions and its responsiveness to anabolic steroids. This Mus musculus (Mouse) protein is G-protein coupled receptor family C group 6 member A (Gprc6a).